The following is a 445-amino-acid chain: Transmembrane protein 184C (445 aa).

Helical transmembrane passes span 15–35, 46–66, 84–104, 177–197, 210–230, 252–272, and 285–305; these read LVVLLYIVGLLVVVPLCVWEL, AWFIAGIFLLMTIPISLWGIL, ILWMVPIYSLDSWIALKYPNI, YTVVRPFTTIIALICELVGVY, YLVILNNMSQLFAMYCLVLFY, VVFVSFWQAVLIALLVKVGVI, and AVATGLQDFIICVEMFLAAIA. Disordered regions lie at residues 369-393 and 421-445; these read EHTSLLSSSTQDPISDASSMPSSPM and TSATRDTEESPELMHNSSEKALDRS. Residues 370 to 390 are compositionally biased toward polar residues; sequence HTSLLSSSTQDPISDASSMPS.

The protein belongs to the TMEM184 family.

Its subcellular location is the membrane. Functionally, may play a role in cell growth. The polypeptide is Transmembrane protein 184C (TMEM184C) (Gallus gallus (Chicken)).